We begin with the raw amino-acid sequence, 374 residues long: Probable neutral protease 2 homolog TRV_05367 (374 aa).

The first 19 residues, 1-19, serve as a signal peptide directing secretion; the sequence is MQVIVALAALGSLAAPALG. Residues 20-189 constitute a propeptide that is removed on maturation; it reads FSIPRGVPVS…RGPLTRINKR (170 aa). 2 disulfides stabilise this stretch: Cys197-Cys267 and Cys274-Cys292. Zn(2+) is bound at residue His317. Residue Glu318 is part of the active site. Zn(2+) is bound by residues His321 and Asp332.

Belongs to the peptidase M35 family. Requires Zn(2+) as cofactor.

It is found in the secreted. It carries out the reaction Preferential cleavage of bonds with hydrophobic residues in P1'. Also 3-Asn-|-Gln-4 and 8-Gly-|-Ser-9 bonds in insulin B chain.. Its function is as follows. Probable secreted metalloprotease that shows high activities on basic nuclear substrates such as histone and protamine. May be involved in virulence. The protein is Probable neutral protease 2 homolog TRV_05367 of Trichophyton verrucosum (strain HKI 0517).